The chain runs to 222 residues: Glutathione S-transferase U21 (222 aa).

One can recognise a GST N-terminal domain in the interval Ala-3–Asn-83. Glutathione contacts are provided by residues Ser-13–Met-14, Asn-40–Lys-41, Thr-54–Ile-55, and Glu-67–Ser-68. A GST C-terminal domain is found at Asp-89–Tyr-211.

This sequence belongs to the GST superfamily. Tau family.

Its subcellular location is the cytoplasm. The protein localises to the cytosol. The catalysed reaction is RX + glutathione = an S-substituted glutathione + a halide anion + H(+). In terms of biological role, may be involved in the conjugation of reduced glutathione to a wide number of exogenous and endogenous hydrophobic electrophiles and have a detoxification role against certain herbicides. This Arabidopsis thaliana (Mouse-ear cress) protein is Glutathione S-transferase U21 (GSTU21).